Reading from the N-terminus, the 99-residue chain is Large ribosomal subunit protein bL27 (99 aa).

A propeptide spanning residues 1–9 (MLIMNLQLF) is cleaved from the precursor.

This sequence belongs to the bacterial ribosomal protein bL27 family. Post-translationally, the N-terminus is cleaved by ribosomal processing cysteine protease Prp.

The sequence is that of Large ribosomal subunit protein bL27 from Clostridium botulinum (strain Alaska E43 / Type E3).